The sequence spans 444 residues: N-succinylarginine dihydrolase (444 aa).

Substrate-binding positions include 19-28, N110, and 137-138; these read AGLSFGNVAS and HR. E174 is a catalytic residue. Substrate is bound at residue R214. H250 is an active-site residue. Substrate contacts are provided by D252 and N362. C368 functions as the Nucleophile in the catalytic mechanism.

The protein belongs to the succinylarginine dihydrolase family. As to quaternary structure, homodimer.

The catalysed reaction is N(2)-succinyl-L-arginine + 2 H2O + 2 H(+) = N(2)-succinyl-L-ornithine + 2 NH4(+) + CO2. It functions in the pathway amino-acid degradation; L-arginine degradation via AST pathway; L-glutamate and succinate from L-arginine: step 2/5. In terms of biological role, catalyzes the hydrolysis of N(2)-succinylarginine into N(2)-succinylornithine, ammonia and CO(2). The polypeptide is N-succinylarginine dihydrolase (Shewanella denitrificans (strain OS217 / ATCC BAA-1090 / DSM 15013)).